The sequence spans 331 residues: Ferredoxin--NADP reductase 2 (331 aa).

The FAD site is built by Glu37, Gln45, Tyr50, Val90, Phe124, Asp286, and Thr327.

It belongs to the ferredoxin--NADP reductase type 2 family. As to quaternary structure, homodimer. The cofactor is FAD.

The catalysed reaction is 2 reduced [2Fe-2S]-[ferredoxin] + NADP(+) + H(+) = 2 oxidized [2Fe-2S]-[ferredoxin] + NADPH. The chain is Ferredoxin--NADP reductase 2 from Listeria monocytogenes serotype 4b (strain F2365).